Consider the following 89-residue polypeptide: Nucleoside triphosphatase I (89 aa).

One can recognise a Helicase ATP-binding domain in the interval 42 to 89 (FLGLDKMHSLLLFHDTGVGKTITTTFIIKQLKNIYTNWSILLLVKKHL). Residue 55 to 62 (HDTGVGKT) participates in ATP binding.

Belongs to the helicase family. NPH I subfamily.

It catalyses the reaction a ribonucleoside 5'-triphosphate + H2O = a ribonucleoside 5'-diphosphate + phosphate + H(+). In terms of biological role, serves two roles in transcription; it acts in concert with viral termination factor/capping enzyme to catalyze release of UUUUUNU-containing nascent RNA from the elongation complex, and it acts by itself as a polymerase elongation factor to facilitate readthrough of intrinsic pause sites. This is Nucleoside triphosphatase I (NPH1) from Swinepox virus (strain Kasza) (SWPV).